The following is a 344-amino-acid chain: tRNA(Ile)-lysidine synthase (344 aa).

43–48 contacts ATP; the sequence is SGGADS.

This sequence belongs to the tRNA(Ile)-lysidine synthase family.

The protein localises to the cytoplasm. It carries out the reaction cytidine(34) in tRNA(Ile2) + L-lysine + ATP = lysidine(34) in tRNA(Ile2) + AMP + diphosphate + H(+). In terms of biological role, ligates lysine onto the cytidine present at position 34 of the AUA codon-specific tRNA(Ile) that contains the anticodon CAU, in an ATP-dependent manner. Cytidine is converted to lysidine, thus changing the amino acid specificity of the tRNA from methionine to isoleucine. This is tRNA(Ile)-lysidine synthase from Bordetella bronchiseptica (strain ATCC BAA-588 / NCTC 13252 / RB50) (Alcaligenes bronchisepticus).